A 157-amino-acid polypeptide reads, in one-letter code: Small ribosomal subunit protein uS7 (157 aa).

This sequence belongs to the universal ribosomal protein uS7 family. In terms of assembly, part of the 30S ribosomal subunit. Contacts proteins S9 and S11.

One of the primary rRNA binding proteins, it binds directly to 16S rRNA where it nucleates assembly of the head domain of the 30S subunit. Is located at the subunit interface close to the decoding center, probably blocks exit of the E-site tRNA. The chain is Small ribosomal subunit protein uS7 from Delftia acidovorans (strain DSM 14801 / SPH-1).